A 544-amino-acid chain; its full sequence is MTCKNTRRLYQIITTFLRYGIDEIIPDIPLTRHARLGRKALFWVRNQHKDQPFGVRLRLALQELGPVWIKLGQMLSTRRDLFEPELAEQLALLQDSVEPFDGKSARQIIEQALGGSLETWFDEFDEQALASASIAQVHTAKFNQNQPLVGKDVVIKVIRPDIEPIIKADIALMYRLASWVPRLSNDARRLRATEVVREYEKTLLDELDLTREMANAIRLRNNFENSEMLYVPEMYPDFCHKNVIVMERIYGILVSDVETLKANGTDMKLLAERGVQVFFTQVFRDSFFHADMHAGNIFVNPNHPENPQYIGIDCGIVGTLNQNDKRYLAESFVAFFNRDYRRVALMHVESGWTPADTDIDAFEQAFREVCEPIFAKPLSEISFGHVLLNLFNVAREFNMEVQPQLVLLQKTLLYIEGLGRQVYPQLDLWQTAKPFLQNWLNEQVGVKAILRDLKQRAPQFREHFAEFPEAVFNALQQQKQINFRLDELNKTLQAQGRQKSHNVRSIVSGVIILGVLWRFDDLPLWLSCGTLVTVLLVLLLQRKS.

The Protein kinase domain occupies glutamate 123–serine 505. Residues leucine 129–valine 137 and lysine 156 each bind ATP. Residue aspartate 291 is the Proton acceptor of the active site. Residues leucine 522–leucine 540 traverse the membrane as a helical segment.

This sequence belongs to the ABC1 family. UbiB subfamily.

The protein localises to the cell inner membrane. Its pathway is cofactor biosynthesis; ubiquinone biosynthesis [regulation]. Its function is as follows. Is probably a protein kinase regulator of UbiI activity which is involved in aerobic coenzyme Q (ubiquinone) biosynthesis. In Actinobacillus pleuropneumoniae serotype 7 (strain AP76), this protein is Probable protein kinase UbiB.